The chain runs to 429 residues: Serine--tRNA ligase (429 aa).

228-230 lines the L-serine pocket; sequence TSE. Residue 259 to 261 participates in ATP binding; the sequence is RAE. Glu282 provides a ligand contact to L-serine. 346–349 serves as a coordination point for ATP; that stretch reads EISS. Ser384 serves as a coordination point for L-serine.

The protein belongs to the class-II aminoacyl-tRNA synthetase family. Type-1 seryl-tRNA synthetase subfamily. Homodimer. The tRNA molecule binds across the dimer.

It is found in the cytoplasm. The enzyme catalyses tRNA(Ser) + L-serine + ATP = L-seryl-tRNA(Ser) + AMP + diphosphate + H(+). It carries out the reaction tRNA(Sec) + L-serine + ATP = L-seryl-tRNA(Sec) + AMP + diphosphate + H(+). It functions in the pathway aminoacyl-tRNA biosynthesis; selenocysteinyl-tRNA(Sec) biosynthesis; L-seryl-tRNA(Sec) from L-serine and tRNA(Sec): step 1/1. Functionally, catalyzes the attachment of serine to tRNA(Ser). Is also able to aminoacylate tRNA(Sec) with serine, to form the misacylated tRNA L-seryl-tRNA(Sec), which will be further converted into selenocysteinyl-tRNA(Sec). This Anaplasma marginale (strain St. Maries) protein is Serine--tRNA ligase.